The sequence spans 250 residues: Probable syntaxin-8B (250 aa).

Residues 1-213 (MGDYWLNEHD…NRRMETIKQN (213 aa)) lie on the Cytoplasmic side of the membrane. Residues 73–100 (EKELLRRKNKVESLISMKNQLNSTLDAA) adopt a coiled-coil conformation. A t-SNARE coiled-coil homology domain is found at 148–210 (QHIMREQDES…RNANRRMETI (63 aa)). Residues 214–234 (AGSTCMIVCIVILIILIVVLI) traverse the membrane as a helical; Anchor for type IV membrane protein segment. Over 235-250 (ATDSGCKIYNDPKHCP) the chain is Vesicular.

Belongs to the syntaxin family.

Its subcellular location is the membrane. In Dictyostelium discoideum (Social amoeba), this protein is Probable syntaxin-8B (syn8B).